Reading from the N-terminus, the 482-residue chain is GTPase Der (482 aa).

EngA-type G domains lie at 3–166 (PVVA…SEQF) and 195–368 (IKLA…NSAT). Residues 9–16 (GRPNVGKS), 56–60 (DTGGI), 118–121 (NKVD), 201–208 (GKPNVGKS), 248–252 (DTAGV), and 313–316 (NKWD) each bind GTP. The 85-residue stretch at 369–453 (KRINTSMLTR…PIKVEFREGA (85 aa)) folds into the KH-like domain.

The protein belongs to the TRAFAC class TrmE-Era-EngA-EngB-Septin-like GTPase superfamily. EngA (Der) GTPase family. As to quaternary structure, associates with the 50S ribosomal subunit.

GTPase that plays an essential role in the late steps of ribosome biogenesis. The polypeptide is GTPase Der (Pseudoalteromonas atlantica (strain T6c / ATCC BAA-1087)).